Consider the following 223-residue polypeptide: Charged multivesicular body protein 3 (223 aa).

Gly2 carries the N-myristoyl glycine lipid modification. The intramolecular interaction with C-terminus stretch occupies residues 2–113 (GLFGKTQEKP…LQKSTEVMKA (112 aa)). The stretch at 22–54 (KIRKEMRVVDRQIRDIQREEEKVKRSVKDAAKK) forms a coiled coil. Important for autoinhibitory function regions lie at residues 59–64 (VCVVLA) and 168–169 (IL). A coiled-coil region spans residues 149–223 (ESMDDQEEME…MQSRLATLRS (75 aa)). An intramolecular interaction with N-terminus region spans residues 151–221 (MDDQEEMEEA…EAMQSRLATL (71 aa)). The interval 151–223 (MDDQEEMEEA…MQSRLATLRS (73 aa)) is interaction with VPS4A. Residue Lys179 forms a Glycyl lysine isopeptide (Lys-Gly) (interchain with G-Cter in ubiquitin) linkage. A disordered region spans residues 180-223 (APSKVTDALPEPEPAGAMAASEGDEEDDEEDLEAMQSRLATLRS). Interaction with STAMBP stretches follow at residues 196-223 (AMAA…TLRS), 204-208 (EEDDE), and 222-223 (RS). At Ser200 the chain carries Phosphoserine. The short motif at 201–212 (EGDEEDDEEDLE) is the MIT-interacting motif element. Positions 201–212 (EGDEEDDEEDLE) are enriched in acidic residues.

This sequence belongs to the SNF7 family. In terms of assembly, probable core component of the endosomal sorting required for transport complex III (ESCRT-III). ESCRT-III components are thought to multimerize to form a flat lattice on the perimeter membrane of the endosome. Several assembly forms of ESCRT-III may exist that interact and act sequentially. Forms a metastable monomer in solution; its core structure (without part of the putative autoinhibitory C-terminal acidic region) oligomerizes into a flat lattice via two different dimerization interfaces. In vitro, heteromerizes with CHMP2A (but not CHMP4) to form helical tubular structures that expose membrane-interacting sites on the outside whereas VPS4B can associate on the inside of the tubule. May interact with IGFBP7; the relevance of such interaction however remains unclear. Interacts with CHMP2A. Interacts with CHMP4A; the interaction requires the release of CHMP4A autoinhibition. Interacts with VPS4A. Interacts with STAMBP; the interaction appears to relieve the autoinhibition of CHMP3. Interacts with VTA1.

It localises to the cytoplasm. Its subcellular location is the cytosol. The protein localises to the membrane. It is found in the endosome. The protein resides in the late endosome membrane. In terms of biological role, probable core component of the endosomal sorting required for transport complex III (ESCRT-III) which is involved in multivesicular bodies (MVBs) formation and sorting of endosomal cargo proteins into MVBs. MVBs contain intraluminal vesicles (ILVs) that are generated by invagination and scission from the limiting membrane of the endosome and mostly are delivered to lysosomes enabling degradation of membrane proteins, such as stimulated growth factor receptors, lysosomal enzymes and lipids. The MVB pathway appears to require the sequential function of ESCRT-O, -I,-II and -III complexes. ESCRT-III proteins mostly dissociate from the invaginating membrane before the ILV is released. The ESCRT machinery also functions in topologically equivalent membrane fission events, such as the terminal stages of cytokinesis. ESCRT-III proteins are believed to mediate the necessary vesicle extrusion and/or membrane fission activities, possibly in conjunction with the AAA ATPase VPS4. Selectively binds to phosphatidylinositol 3,5-bisphosphate PtdIns(3,5)P2 and PtdIns(3,4)P2 in preference to other phosphoinositides tested. Involved in late stages of cytokinesis. Plays a role in endosomal sorting/trafficking of EGF receptor. The protein is Charged multivesicular body protein 3 (Chmp3) of Rattus norvegicus (Rat).